Reading from the N-terminus, the 306-residue chain is MATH domain and coiled-coil domain-containing protein At3g29580 (306 aa).

The MATH domain occupies 6–132 (DNKFTWVIKN…NGEIKIVVEF (127 aa)). A coiled-coil region spans residues 253–298 (FKLDWLEKKLNEVLEKKEKEESYETRMREIEEEMKDLKAKALDVGA).

This chain is MATH domain and coiled-coil domain-containing protein At3g29580, found in Arabidopsis thaliana (Mouse-ear cress).